The chain runs to 31 residues: Relaxin B chain (31 aa).

Position 1 is a pyrrolidone carboxylic acid (Gln1).

It belongs to the insulin family. Heterodimer of a B chain and an A chain linked by two disulfide bonds.

It localises to the secreted. Relaxin is an ovarian hormone that acts with estrogen to produce dilatation of the birth canal in many mammals. The protein is Relaxin B chain of Phocoenoides dalli dalli (Dall's porpoise).